The following is a 118-amino-acid chain: Large ribosomal subunit protein bL20 (118 aa).

This sequence belongs to the bacterial ribosomal protein bL20 family.

Binds directly to 23S ribosomal RNA and is necessary for the in vitro assembly process of the 50S ribosomal subunit. It is not involved in the protein synthesizing functions of that subunit. This chain is Large ribosomal subunit protein bL20, found in Sulfurovum sp. (strain NBC37-1).